We begin with the raw amino-acid sequence, 2177 residues long: Mediator of RNA polymerase II transcription subunit 12 (2177 aa).

The segment at 12–35 (RPLKRPRLGPPDVYPQDPKQKEDE) is disordered. An N6-acetyllysine modification is found at Lys80. Tyr166 is subject to Phosphotyrosine. Disordered stretches follow at residues 323 to 344 (QSTSTLPTTPAPQPPTSSTPST), 627 to 669 (GAPG…MDID), 690 to 717 (TMPCEGKGSPSPEKPDVEKEVKPPPKEK), and 1241 to 1266 (TVTGGTEELPEEEGGGGSGGRRQGGR). Phosphoserine is present on residues Ser635, Ser665, Ser698, and Ser700. Positions 702–717 (EKPDVEKEVKPPPKEK) are enriched in basic and acidic residues. Residues Ser1258 and Ser1269 each carry the phosphoserine modification. Residues 1394–1411 (AETGSSSGSTASNMPSSS) show a composition bias toward low complexity. 3 disordered regions span residues 1394–1415 (AETGSSSGSTASNMPSSSKTKP), 1450–1474 (ELEKGQHLGSSSRKERDRQKQKSMS), and 1738–1829 (YLEP…PGSI). Basic and acidic residues-rich tracts occupy residues 1450–1469 (ELEKGQHLGSSSRKERDRQK) and 1758–1771 (EPEKKAPEPPKTDK). Residues 1616-2051 (LAKKLQKELG…VRSTAILPEQ (436 aa)) are interaction with CTNNB1 and GLI3. Residues 1784 to 1793 (KKSTKGKKRS) are compositionally biased toward basic residues. Position 1798 is an N6-acetyllysine (Lys1798). Asymmetric dimethylarginine; alternate is present on Arg1899. Arg1899 is subject to Omega-N-methylarginine; alternate. Arg1910 carries the omega-N-methylarginine modification. Disordered regions lie at residues 1919–1938 (QGMLGQSSVHQMTPSSSYGL) and 1967–1989 (SYSSQPYQSTHPSTNPTLVDPTR). Polar residues predominate over residues 1927–1938 (VHQMTPSSSYGL). Over residues 1967-1980 (SYSSQPYQSTHPST) the composition is skewed to low complexity. An asymmetric dimethylarginine mark is found at Arg1994 and Arg2015. 3 stretches are compositionally biased toward low complexity: residues 2115-2125 (QHQQQQQQQAA), 2133-2149 (SQPQFQRQGLQQTQQQQ), and 2158-2171 (LQQQLSNTQPQPST). Disordered stretches follow at residues 2115 to 2149 (QHQQQQQQQAAPPQPQPQSQPQFQRQGLQQTQQQQ) and 2158 to 2177 (LQQQLSNTQPQPSTNIFGRY).

Belongs to the Mediator complex subunit 12 family. Component of the Mediator complex, which is composed of MED1, MED4, MED6, MED7, MED8, MED9, MED10, MED11, MED12, MED13, MED13L, MED14, MED15, MED16, MED17, MED18, MED19, MED20, MED21, MED22, MED23, MED24, MED25, MED26, MED27, MED29, MED30, MED31, CCNC, CDK8 and CDC2L6/CDK11. The MED12, MED13, CCNC and CDK8 subunits form a distinct module termed the CDK8 module. Mediator containing the CDK8 module is less active than Mediator lacking this module in supporting transcriptional activation. Individual preparations of the Mediator complex lacking one or more distinct subunits have been variously termed ARC, CRSP, DRIP, PC2, SMCC and TRAP. Also interacts with CTNNB1 and GLI3. Ubiquitous.

It localises to the nucleus. Functionally, component of the Mediator complex, a coactivator involved in the regulated transcription of nearly all RNA polymerase II-dependent genes. Mediator functions as a bridge to convey information from gene-specific regulatory proteins to the basal RNA polymerase II transcription machinery. Mediator is recruited to promoters by direct interactions with regulatory proteins and serves as a scaffold for the assembly of a functional pre-initiation complex with RNA polymerase II and the general transcription factors. This subunit may specifically regulate transcription of targets of the Wnt signaling pathway and SHH signaling pathway. This chain is Mediator of RNA polymerase II transcription subunit 12 (MED12), found in Homo sapiens (Human).